Reading from the N-terminus, the 138-residue chain is Phospholipase A2 homolog (138 aa).

A signal peptide spans 1–16 (MRALWIVAVWLIGVEG). Cystine bridges form between Cys42/Cys131, Cys44/Cys60, Cys59/Cys111, Cys65/Cys138, Cys66/Cys104, Cys73/Cys97, and Cys91/Cys102. Residues 121 to 133 (KKYTYYPNFLCKG) form an important for membrane-damaging activities in eukaryotes and bacteria; heparin-binding region.

This sequence belongs to the phospholipase A2 family. Group II subfamily. S49 sub-subfamily. Monomer. In terms of tissue distribution, expressed by the venom gland.

It is found in the secreted. In terms of biological role, snake venom phospholipase A2 homolog that lacks enzymatic activity. Shows high myotoxin activities and displays edema-inducing activities. Has cytotoxic activities against HUVEC cells (LC(50)=5.0 uL) and human lung adenocarcinoma A549 cells (LC(50)=5.2 uL). This is Phospholipase A2 homolog from Echis ocellatus (Ocellated saw-scaled viper).